A 297-amino-acid polypeptide reads, in one-letter code: Hydroxysqualene synthase (297 aa).

Belongs to the phytoene/squalene synthase family. HpnC subfamily.

The catalysed reaction is presqualene diphosphate + H2O = hydroxysqualene + diphosphate. Its pathway is secondary metabolite biosynthesis; hopanoid biosynthesis. Functionally, involved in the biosynthesis of the hopanoid precursor squalene (SQ) from farnesyl diphosphate (FPP). Catalyzes the second step, the conversion of presqualene diphosphate (PSPP) to hydroxysqualene (HSQ). In Zymomonas mobilis subsp. mobilis (strain ATCC 31821 / ZM4 / CP4), this protein is Hydroxysqualene synthase.